A 226-amino-acid polypeptide reads, in one-letter code: 2-C-methyl-D-erythritol 4-phosphate cytidylyltransferase (226 aa).

This sequence belongs to the IspD/TarI cytidylyltransferase family. IspD subfamily.

It catalyses the reaction 2-C-methyl-D-erythritol 4-phosphate + CTP + H(+) = 4-CDP-2-C-methyl-D-erythritol + diphosphate. It participates in isoprenoid biosynthesis; isopentenyl diphosphate biosynthesis via DXP pathway; isopentenyl diphosphate from 1-deoxy-D-xylulose 5-phosphate: step 2/6. Its function is as follows. Catalyzes the formation of 4-diphosphocytidyl-2-C-methyl-D-erythritol from CTP and 2-C-methyl-D-erythritol 4-phosphate (MEP). This is 2-C-methyl-D-erythritol 4-phosphate cytidylyltransferase from Haemophilus ducreyi (strain 35000HP / ATCC 700724).